The following is a 1070-amino-acid chain: 3',5'-cyclic-AMP phosphodiesterase (1070 aa).

Disordered stretches follow at residues 1–91 (MSQE…KQDS), 166–215 (STSI…TRFQ), 487–516 (VPAS…LSQG), and 615–653 (SAGQ…RLPT). The segment covering 51–69 (KQVQVQSQKFSSTSSTTKV) has biased composition (low complexity). Over residues 70–84 (ATHSFSMSSSAGTTG) the composition is skewed to polar residues. The segment covering 166-210 (STSIITSSEQRTSTSTSSSSSTRYIASGSSNLAGGNSNSASSASS) has biased composition (low complexity). Residues 488 to 506 (PASNKSRRPNQSSSASRSG) are compositionally biased toward polar residues. The region spanning 656 to 985 (VETPRENELG…DYYQSMIPPS (330 aa)) is the PDEase domain. H732 serves as the catalytic Proton donor. 732 to 736 (HNSLH) is a binding site for 3',5'-cyclic AMP. 4 residues coordinate a divalent metal cation: H736, H772, D773, and D890. Residues D773, D890, and Q941 each contribute to the 3',5'-cyclic AMP site. The segment covering 1007–1024 (EESDQENLAELEEGDESG) has biased composition (acidic residues). Positions 1007-1070 (EESDQENLAE…CQNQPQHGGM (64 aa)) are disordered. Residues 1025–1042 (GESTTTGTTGTTAASALS) show a composition bias toward low complexity. A compositionally biased stretch (gly residues) spans 1043–1054 (GAGGGGGGGGGM). Residues 1060–1070 (GCQNQPQHGGM) show a composition bias toward polar residues.

Belongs to the cyclic nucleotide phosphodiesterase family. PDE4 subfamily. Monomer. Requires a divalent metal cation as cofactor.

It carries out the reaction 3',5'-cyclic AMP + H2O = AMP + H(+). It participates in purine metabolism; 3',5'-cyclic AMP degradation; AMP from 3',5'-cyclic AMP: step 1/1. Hydrolyzes the second messenger cAMP, which is a key regulator of many important physiological processes. Vital for female fertility. Required for learning/memory. The chain is 3',5'-cyclic-AMP phosphodiesterase (dnc) from Drosophila melanogaster (Fruit fly).